Here is a 155-residue protein sequence, read N- to C-terminus: Small ribosomal subunit protein uS7 (155 aa).

Belongs to the universal ribosomal protein uS7 family. Part of the 30S ribosomal subunit. Contacts proteins S9 and S11.

In terms of biological role, one of the primary rRNA binding proteins, it binds directly to 16S rRNA where it nucleates assembly of the head domain of the 30S subunit. Is located at the subunit interface close to the decoding center, probably blocks exit of the E-site tRNA. In Thermosipho melanesiensis (strain DSM 12029 / CIP 104789 / BI429), this protein is Small ribosomal subunit protein uS7.